The following is a 128-amino-acid chain: UPF0325 protein YaeH (128 aa).

This sequence belongs to the UPF0325 family.

The protein is UPF0325 protein YaeH of Escherichia fergusonii (strain ATCC 35469 / DSM 13698 / CCUG 18766 / IAM 14443 / JCM 21226 / LMG 7866 / NBRC 102419 / NCTC 12128 / CDC 0568-73).